A 506-amino-acid chain; its full sequence is L-amino-acid oxidase (506 aa).

The signal sequence occupies residues Met-1–Cys-18. Cys-28 and Cys-191 are oxidised to a cystine. Glu-36 lines the Zn(2+) pocket. FAD is bound by residues Met-61–Ser-62, Ser-62, Glu-81–Ala-82, Arg-89, and Gly-105–Arg-108. Arg-108 is a binding site for substrate. Residues Glu-111, Glu-118, and Glu-150 each contribute to the Zn(2+) site. An N-linked (GlcNAc...) asparagine glycan is attached at Asn-190. Asp-219 lines the Zn(2+) pocket. Residue His-241 participates in substrate binding. Position 248 (Glu-248) interacts with Zn(2+). Residue Val-279 participates in FAD binding. Positions 299 and 332 each coordinate Zn(2+). The cysteines at positions 349 and 430 are disulfide-linked. Residue Tyr-390 participates in substrate binding. His-458 lines the Zn(2+) pocket. FAD contacts are provided by residues Glu-475 and Gly-482–Thr-487. Residue Gly-482–Trp-483 participates in substrate binding.

It belongs to the flavin monoamine oxidase family. FIG1 subfamily. In terms of assembly, homodimer; non-covalently linked. Stabilized by a single zinc-binding site located at the dimer interface (Asp-219, His-332 and His-458). Other zinc-bind sites can be understood as transient and non-specific, and appear due to the high concentration of zinc ions used in the crystallization experiments. Requires FAD as cofactor. As to expression, expressed by the venom gland.

The protein localises to the secreted. It catalyses the reaction an L-alpha-amino acid + O2 + H2O = a 2-oxocarboxylate + H2O2 + NH4(+). The enzyme catalyses L-leucine + O2 + H2O = 4-methyl-2-oxopentanoate + H2O2 + NH4(+). The catalysed reaction is L-phenylalanine + O2 + H2O = 3-phenylpyruvate + H2O2 + NH4(+). It carries out the reaction L-tryptophan + O2 + H2O = indole-3-pyruvate + H2O2 + NH4(+). It catalyses the reaction L-methionine + O2 + H2O = 4-methylsulfanyl-2-oxobutanoate + H2O2 + NH4(+). The enzyme catalyses L-isoleucine + O2 + H2O = (S)-3-methyl-2-oxopentanoate + H2O2 + NH4(+). The catalysed reaction is L-tyrosine + O2 + H2O = 3-(4-hydroxyphenyl)pyruvate + H2O2 + NH4(+). Functionally, catalyzes an oxidative deamination of predominantly hydrophobic and aromatic L-amino acids, thus producing hydrogen peroxide that may contribute to the diverse toxic effects of this enzyme. Shows high catalytic activity against L-Met, L-Leu, L-Phe, L-Trp, L-Tyr, L-Ile. Shows no or weak activity on L-Cys, L-Val, L-Gln, L-Thr, L-Ser, L-Lys, L-Arg, L-Asn, L-Glu, L-Gly, L-Pro, L-Asp and L-His. Induces platelet aggregation in platelet-rich plasma, probably due to hydrogen peroxide production, since catalase inhibits aggregation effect. Induces moderate mouse paw edema. Induces apoptosis and shows cytotoxicity against several cancer cell lines, which is inhibited by catalase. Shows hemolytic activity and antibacterial activities against both Gram-positive and Gram-negative bacteria. Has parasiticidal activities against both trypanosomes and leishmania, as a result of enzyme-catalyzed hydrogen peroxide production. Unlike other snake venom L-amino acid oxidases, does not induce hemorrhage (with 50 ug of enzyme). The sequence is that of L-amino-acid oxidase from Bothrops atrox (Barba amarilla).